The following is a 449-amino-acid chain: Probable glycine dehydrogenase (decarboxylating) subunit 1 (449 aa).

It belongs to the GcvP family. N-terminal subunit subfamily. In terms of assembly, the glycine cleavage system is composed of four proteins: P, T, L and H. In this organism, the P 'protein' is a heterodimer of two subunits.

It carries out the reaction N(6)-[(R)-lipoyl]-L-lysyl-[glycine-cleavage complex H protein] + glycine + H(+) = N(6)-[(R)-S(8)-aminomethyldihydrolipoyl]-L-lysyl-[glycine-cleavage complex H protein] + CO2. The glycine cleavage system catalyzes the degradation of glycine. The P protein binds the alpha-amino group of glycine through its pyridoxal phosphate cofactor; CO(2) is released and the remaining methylamine moiety is then transferred to the lipoamide cofactor of the H protein. The sequence is that of Probable glycine dehydrogenase (decarboxylating) subunit 1 from Solibacter usitatus (strain Ellin6076).